Reading from the N-terminus, the 93-residue chain is Small ribosomal subunit protein uS19 (93 aa).

Belongs to the universal ribosomal protein uS19 family.

Protein S19 forms a complex with S13 that binds strongly to the 16S ribosomal RNA. This Mycobacterium leprae (strain TN) protein is Small ribosomal subunit protein uS19 (rpsS).